Consider the following 227-residue polypeptide: PKHD-type hydroxylase Bxeno_B2194 (227 aa).

Positions 78-178 (KVFPPLFNRY…RVASFFWIQS (101 aa)) constitute a Fe2OG dioxygenase domain. Fe cation contacts are provided by His-96, Asp-98, and His-159. A 2-oxoglutarate-binding site is contributed by Arg-169.

The cofactor is Fe(2+). It depends on L-ascorbate as a cofactor.

This is PKHD-type hydroxylase Bxeno_B2194 from Paraburkholderia xenovorans (strain LB400).